Reading from the N-terminus, the 93-residue chain is Integration host factor subunit beta (93 aa).

It belongs to the bacterial histone-like protein family. Heterodimer of an alpha and a beta chain.

Functionally, this protein is one of the two subunits of integration host factor, a specific DNA-binding protein that functions in genetic recombination as well as in transcriptional and translational control. This is Integration host factor subunit beta from Aliivibrio fischeri (strain ATCC 700601 / ES114) (Vibrio fischeri).